The following is a 332-amino-acid chain: MPNWLSLAEQVMEGYELADEEALAILDCPDDELLLLLQGAYRIRSVYYGNKVKLNMIMNAKSGLCPENCGYCSQSAVATAPVKTYKMLDKETLLRGAEEAYRLQIGTYCIVASGRGPSDKEVDIVVSAVKEIKERFGLKVCACLGLLKPEQAARLKEAGVDRYNHNINTSKQHHPNITTSHTYDDRVRTVETVKEAGLSPCSGVIIGMKETKQDIVDMARSLRELDADSIPVNFLHAIDGTPLAGTNELNPRYCLKVLALFRYMNPTKEIRIAGGREVNLRSLQPLGLYAANSIFVGDYLTTLGQEKSADYKMLEDLGFEIEFSPAPQIGVV.

The Radical SAM core domain occupies 47–273 (YYGNKVKLNM…MNPTKEIRIA (227 aa)). The [4Fe-4S] cluster site is built by Cys-65, Cys-69, and Cys-72. [2Fe-2S] cluster-binding residues include Cys-109, Cys-141, Cys-201, and Arg-271.

Belongs to the radical SAM superfamily. Biotin synthase family. Homodimer. Requires [4Fe-4S] cluster as cofactor. The cofactor is [2Fe-2S] cluster.

The catalysed reaction is (4R,5S)-dethiobiotin + (sulfur carrier)-SH + 2 reduced [2Fe-2S]-[ferredoxin] + 2 S-adenosyl-L-methionine = (sulfur carrier)-H + biotin + 2 5'-deoxyadenosine + 2 L-methionine + 2 oxidized [2Fe-2S]-[ferredoxin]. It participates in cofactor biosynthesis; biotin biosynthesis; biotin from 7,8-diaminononanoate: step 2/2. Functionally, catalyzes the conversion of dethiobiotin (DTB) to biotin by the insertion of a sulfur atom into dethiobiotin via a radical-based mechanism. The chain is Biotin synthase from Geobacillus thermodenitrificans (strain NG80-2).